A 165-amino-acid chain; its full sequence is Crossover junction endodeoxyribonuclease RuvC (165 aa).

Catalysis depends on residues D6, E67, and D142. The Mg(2+) site is built by D6, E67, and D142.

This sequence belongs to the RuvC family. Homodimer which binds Holliday junction (HJ) DNA. The HJ becomes 2-fold symmetrical on binding to RuvC with unstacked arms; it has a different conformation from HJ DNA in complex with RuvA. In the full resolvosome a probable DNA-RuvA(4)-RuvB(12)-RuvC(2) complex forms which resolves the HJ. The cofactor is Mg(2+).

Its subcellular location is the cytoplasm. The catalysed reaction is Endonucleolytic cleavage at a junction such as a reciprocal single-stranded crossover between two homologous DNA duplexes (Holliday junction).. Functionally, the RuvA-RuvB-RuvC complex processes Holliday junction (HJ) DNA during genetic recombination and DNA repair. Endonuclease that resolves HJ intermediates. Cleaves cruciform DNA by making single-stranded nicks across the HJ at symmetrical positions within the homologous arms, yielding a 5'-phosphate and a 3'-hydroxyl group; requires a central core of homology in the junction. The consensus cleavage sequence is 5'-(A/T)TT(C/G)-3'. Cleavage occurs on the 3'-side of the TT dinucleotide at the point of strand exchange. HJ branch migration catalyzed by RuvA-RuvB allows RuvC to scan DNA until it finds its consensus sequence, where it cleaves and resolves the cruciform DNA. The protein is Crossover junction endodeoxyribonuclease RuvC of Chlamydia abortus (strain DSM 27085 / S26/3) (Chlamydophila abortus).